We begin with the raw amino-acid sequence, 260 residues long: Malonyl-[acyl-carrier protein] O-methyltransferase (260 aa).

It belongs to the methyltransferase superfamily.

The catalysed reaction is malonyl-[ACP] + S-adenosyl-L-methionine = malonyl-[ACP] methyl ester + S-adenosyl-L-homocysteine. The protein operates within cofactor biosynthesis; biotin biosynthesis. In terms of biological role, converts the free carboxyl group of a malonyl-thioester to its methyl ester by transfer of a methyl group from S-adenosyl-L-methionine (SAM). It allows to synthesize pimeloyl-ACP via the fatty acid synthetic pathway. In Haemophilus influenzae (strain ATCC 51907 / DSM 11121 / KW20 / Rd), this protein is Malonyl-[acyl-carrier protein] O-methyltransferase.